Consider the following 259-residue polypeptide: Glucosamine-6-phosphate deaminase (259 aa).

The active-site Proton acceptor; for enolization step is the Asp66. Residue Asp135 is the For ring-opening step of the active site. Residue His137 is the Proton acceptor; for ring-opening step of the active site. Glu142 (for ring-opening step) is an active-site residue.

This sequence belongs to the glucosamine/galactosamine-6-phosphate isomerase family. NagB subfamily.

It catalyses the reaction alpha-D-glucosamine 6-phosphate + H2O = beta-D-fructose 6-phosphate + NH4(+). It functions in the pathway amino-sugar metabolism; N-acetylneuraminate degradation; D-fructose 6-phosphate from N-acetylneuraminate: step 5/5. Its function is as follows. Catalyzes the reversible isomerization-deamination of glucosamine 6-phosphate (GlcN6P) to form fructose 6-phosphate (Fru6P) and ammonium ion. The chain is Glucosamine-6-phosphate deaminase from Pseudarthrobacter chlorophenolicus (strain ATCC 700700 / DSM 12829 / CIP 107037 / JCM 12360 / KCTC 9906 / NCIMB 13794 / A6) (Arthrobacter chlorophenolicus).